We begin with the raw amino-acid sequence, 274 residues long: Sulfur carrier protein FdhD (274 aa).

Cys-121 acts as the Cysteine persulfide intermediate in catalysis. 258-263 is a Mo-bis(molybdopterin guanine dinucleotide) binding site; that stretch reads FSKPGR.

Belongs to the FdhD family.

Its subcellular location is the cytoplasm. Functionally, required for formate dehydrogenase (FDH) activity. Acts as a sulfur carrier protein that transfers sulfur from IscS to the molybdenum cofactor prior to its insertion into FDH. The sequence is that of Sulfur carrier protein FdhD from Yersinia pseudotuberculosis serotype IB (strain PB1/+).